Reading from the N-terminus, the 426-residue chain is Histidine--tRNA ligase 1 (426 aa).

This sequence belongs to the class-II aminoacyl-tRNA synthetase family. Homodimer.

It is found in the cytoplasm. It carries out the reaction tRNA(His) + L-histidine + ATP = L-histidyl-tRNA(His) + AMP + diphosphate + H(+). The chain is Histidine--tRNA ligase 1 from Shouchella clausii (strain KSM-K16) (Alkalihalobacillus clausii).